The sequence spans 199 residues: UPF0301 protein Ajs_3573 (199 aa).

Belongs to the UPF0301 (AlgH) family.

The protein is UPF0301 protein Ajs_3573 of Acidovorax sp. (strain JS42).